Consider the following 232-residue polypeptide: Purine nucleoside phosphorylase DeoD-type (232 aa).

A purine D-ribonucleoside is bound at residue His-4. Residues Gly-20, Arg-24, Arg-43, and Arg-87–Ser-90 contribute to the phosphate site. Residues Glu-162, Glu-178–Glu-180, and Ser-202–Asp-203 contribute to the a purine D-ribonucleoside site. Asp-203 serves as the catalytic Proton donor.

It belongs to the PNP/UDP phosphorylase family. In terms of assembly, homohexamer; trimer of homodimers.

The enzyme catalyses a purine D-ribonucleoside + phosphate = a purine nucleobase + alpha-D-ribose 1-phosphate. It carries out the reaction a purine 2'-deoxy-D-ribonucleoside + phosphate = a purine nucleobase + 2-deoxy-alpha-D-ribose 1-phosphate. Catalyzes the reversible phosphorolytic breakdown of the N-glycosidic bond in the beta-(deoxy)ribonucleoside molecules, with the formation of the corresponding free purine bases and pentose-1-phosphate. The chain is Purine nucleoside phosphorylase DeoD-type from Bacillus velezensis (strain DSM 23117 / BGSC 10A6 / LMG 26770 / FZB42) (Bacillus amyloliquefaciens subsp. plantarum).